The sequence spans 375 residues: Thioredoxin reductase 1, mitochondrial (375 aa).

The transit peptide at 1–37 (MNCVSRLKCLISKARSFARLGGESTLSQPPSLASAAF) directs the protein to the mitochondrion. FAD contacts are provided by residues 58–61 (SGPA), 79–80 (FE), 87–92 (IAPGGQ), N101, V134, C192, D337, and 344–346 (RQA). A disulfide bridge links C189 with C192.

Belongs to the class-II pyridine nucleotide-disulfide oxidoreductase family. Homodimer. FAD is required as a cofactor. In terms of tissue distribution, ubiquitous.

It localises to the cytoplasm. The protein localises to the mitochondrion. The enzyme catalyses [thioredoxin]-dithiol + NADP(+) = [thioredoxin]-disulfide + NADPH + H(+). Its function is as follows. NADPH-dependent thioredoxin-disulfide reductase that reduces thioredoxins O1, O2 and F3. This chain is Thioredoxin reductase 1, mitochondrial (NTR1), found in Arabidopsis thaliana (Mouse-ear cress).